The sequence spans 149 residues: Cyanate hydratase (149 aa).

Catalysis depends on residues Arg-90, Glu-93, and Ser-116.

This sequence belongs to the cyanase family.

The enzyme catalyses cyanate + hydrogencarbonate + 3 H(+) = NH4(+) + 2 CO2. In terms of biological role, catalyzes the reaction of cyanate with bicarbonate to produce ammonia and carbon dioxide. This is Cyanate hydratase from Synechocystis sp. (strain ATCC 27184 / PCC 6803 / Kazusa).